The chain runs to 391 residues: Protein kinase ORF14 (391 aa).

The Protein kinase domain maps to 109 to 391 (VPLRHTRGNI…ETLVDEFSKI (283 aa)). Residue lysine 134 coordinates ATP. Aspartate 235 (proton acceptor) is an active-site residue.

Belongs to the protein kinase superfamily. Ser/Thr protein kinase family.

It catalyses the reaction L-seryl-[protein] + ATP = O-phospho-L-seryl-[protein] + ADP + H(+). The enzyme catalyses L-threonyl-[protein] + ATP = O-phospho-L-threonyl-[protein] + ADP + H(+). The polypeptide is Protein kinase ORF14 (ORF14) (Ictalurid herpesvirus 1 (strain Auburn) (IcHV-1)).